Reading from the N-terminus, the 213-residue chain is High frequency lysogenization protein HflD (213 aa).

The stretch at 79–126 (QGLNAELTRYTLSLMVLERKLSSAKGALDTLGNRINGLQRQLEHFDLQ) forms a coiled coil.

The protein belongs to the HflD family. As to quaternary structure, interacts with CII protein from phage lambda.

The protein localises to the cytoplasm. Its subcellular location is the cell inner membrane. Its function is as follows. Negative regulator of phage lambda lysogenization. Contributes to the degradation of the phage regulatory protein CII. Acts probably by holding CII on the membrane surface, away from the target promoters, but close to the FtsH protease. In Escherichia coli O127:H6 (strain E2348/69 / EPEC), this protein is High frequency lysogenization protein HflD.